The following is a 418-amino-acid chain: Mitochondrial distribution and morphology protein 10 (418 aa).

Belongs to the MDM10 family. As to quaternary structure, component of the ER-mitochondria encounter structure (ERMES) or MDM complex, composed of MMM1, MDM10, MDM12 and MDM34. Associates with the mitochondrial outer membrane sorting assembly machinery SAM(core) complex.

Its subcellular location is the mitochondrion outer membrane. Its function is as follows. Component of the ERMES/MDM complex, which serves as a molecular tether to connect the endoplasmic reticulum and mitochondria. Components of this complex are involved in the control of mitochondrial shape and protein biogenesis and may function in phospholipid exchange. MDM10 is involved in the late assembly steps of the general translocase of the mitochondrial outer membrane (TOM complex). Functions in the TOM40-specific route of the assembly of outer membrane beta-barrel proteins, including the association of TOM40 with the receptor TOM22 and small TOM proteins. Can associate with the SAM(core) complex as well as the MDM12-MMM1 complex, both involved in late steps of the major beta-barrel assembly pathway, that is responsible for biogenesis of all outer membrane beta-barrel proteins. May act as a switch that shuttles between both complexes and channels precursor proteins into the TOM40-specific pathway. Plays a role in mitochondrial morphology and in the inheritance of mitochondria. This chain is Mitochondrial distribution and morphology protein 10, found in Meyerozyma guilliermondii (strain ATCC 6260 / CBS 566 / DSM 6381 / JCM 1539 / NBRC 10279 / NRRL Y-324) (Yeast).